The sequence spans 359 residues: Caffeic acid 3-O-methyltransferase (359 aa).

Substrate is bound at residue 126 to 132 (MNQDKVL). The segment at 158–176 (AFEYHGTDPRFNKVFNRGM) is substrate binding. The S-adenosyl-L-methionine site is built by Gly-204, Asp-227, Asp-247, Met-248, and Lys-261. The active-site Proton acceptor is His-265.

It belongs to the class I-like SAM-binding methyltransferase superfamily. Cation-independent O-methyltransferase family. COMT subfamily. In terms of assembly, homodimer. As to expression, fruit. Not expressed in leaf.

It catalyses the reaction (E)-caffeate + S-adenosyl-L-methionine = (E)-ferulate + S-adenosyl-L-homocysteine + H(+). It functions in the pathway aromatic compound metabolism; phenylpropanoid biosynthesis. Functionally, catalyzes the conversion of caffeic acid to ferulic acid and of 5-hydroxyferulic acid to sinapic acid. The resulting products may subsequently be converted to the corresponding alcohols that are incorporated into lignins. The chain is Caffeic acid 3-O-methyltransferase (COMT) from Capsicum annuum (Capsicum pepper).